A 113-amino-acid polypeptide reads, in one-letter code: MNYASFIIKIIKKPKQSFFEKEISLTEISGKLYQIRNKKKIEIPVSLSLWGNLAYDTMQYYHINDYVIVEGYVSLRDKISSGYQIPVDKHIEVSGFKIYPFLLDSIQLTKMDK.

An SSB domain is found at 1 to 101 (MNYASFIIKI…EVSGFKIYPF (101 aa)).

It is found in the plastid. Its subcellular location is the chloroplast. In Trieres chinensis (Marine centric diatom), this protein is Putative single-stranded DNA-binding protein ycf41 (ycf41).